A 661-amino-acid polypeptide reads, in one-letter code: 1-deoxy-D-xylulose-5-phosphate synthase (661 aa).

Residues His98 and 139–141 (AHS) each bind thiamine diphosphate. Asp170 contributes to the Mg(2+) binding site. Residues 171 to 172 (GA), Asn199, Tyr309, and Glu391 each bind thiamine diphosphate. Asn199 contributes to the Mg(2+) binding site.

Belongs to the transketolase family. DXPS subfamily. Homodimer. The cofactor is Mg(2+). Thiamine diphosphate is required as a cofactor.

The enzyme catalyses D-glyceraldehyde 3-phosphate + pyruvate + H(+) = 1-deoxy-D-xylulose 5-phosphate + CO2. It functions in the pathway metabolic intermediate biosynthesis; 1-deoxy-D-xylulose 5-phosphate biosynthesis; 1-deoxy-D-xylulose 5-phosphate from D-glyceraldehyde 3-phosphate and pyruvate: step 1/1. Catalyzes the acyloin condensation reaction between C atoms 2 and 3 of pyruvate and glyceraldehyde 3-phosphate to yield 1-deoxy-D-xylulose-5-phosphate (DXP). This is 1-deoxy-D-xylulose-5-phosphate synthase from Bradyrhizobium diazoefficiens (strain JCM 10833 / BCRC 13528 / IAM 13628 / NBRC 14792 / USDA 110).